The primary structure comprises 428 residues: Glutamate-1-semialdehyde 2,1-aminomutase (428 aa).

Lys-265 is subject to N6-(pyridoxal phosphate)lysine.

Belongs to the class-III pyridoxal-phosphate-dependent aminotransferase family. HemL subfamily. As to quaternary structure, homodimer. Pyridoxal 5'-phosphate is required as a cofactor.

It is found in the cytoplasm. It carries out the reaction (S)-4-amino-5-oxopentanoate = 5-aminolevulinate. Its pathway is porphyrin-containing compound metabolism; protoporphyrin-IX biosynthesis; 5-aminolevulinate from L-glutamyl-tRNA(Glu): step 2/2. This Vesicomyosocius okutanii subsp. Calyptogena okutanii (strain HA) protein is Glutamate-1-semialdehyde 2,1-aminomutase.